Consider the following 103-residue polypeptide: Protein Rev (103 aa).

Ser5 is modified (phosphoserine; by host CK2). The homomultimerization stretch occupies residues Ile17 to Asn25. 2 disordered regions span residues Ser24–Ala49 and Ile82–Asn103. Residues Ser33 to Ala49 carry the Nuclear localization signal and RNA-binding (RRE) motif. Positions Asn35–Gln48 are enriched in basic residues. Positions Val72–Arg83 match the Nuclear export signal and binding to XPO1 motif.

Belongs to the HIV-1 REV protein family. In terms of assembly, homomultimer; when bound to the RRE. Multimeric assembly is essential for activity and may involve XPO1. Binds to human KPNB1, XPO1, TNPO1, RANBP5 and IPO7. Interacts with the viral Integrase. Interacts with human KHDRBS1. Interacts with human NAP1; this interaction decreases Rev multimerization and stimulates its activity. Interacts with human DEAD-box helicases DDX3 and DDX24; these interactions may serve for viral RNA export to the cytoplasm and packaging, respectively. Interacts with human PSIP1; this interaction may inhibit HIV-1 DNA integration by promoting dissociation of the Integrase-LEDGF/p75 complex. In terms of processing, asymmetrically arginine dimethylated at one site by host PRMT6. Methylation impairs the RNA-binding activity and export of viral RNA from the nucleus to the cytoplasm. Post-translationally, phosphorylated by protein kinase CK2. Presence of, and maybe binding to the N-terminus of the regulatory beta subunit of CK2 is necessary for CK2-mediated Rev's phosphorylation.

It is found in the host nucleus. Its subcellular location is the host nucleolus. The protein resides in the host cytoplasm. Its function is as follows. Escorts unspliced or incompletely spliced viral pre-mRNAs (late transcripts) out of the nucleus of infected cells. These pre-mRNAs carry a recognition sequence called Rev responsive element (RRE) located in the env gene, that is not present in fully spliced viral mRNAs (early transcripts). This function is essential since most viral proteins are translated from unspliced or partially spliced pre-mRNAs which cannot exit the nucleus by the pathway used by fully processed cellular mRNAs. Rev itself is translated from a fully spliced mRNA that readily exits the nucleus. Rev's nuclear localization signal (NLS) binds directly to KPNB1/Importin beta-1 without previous binding to KPNA1/Importin alpha-1. KPNB1 binds to the GDP bound form of RAN (Ran-GDP) and targets Rev to the nucleus. In the nucleus, the conversion from Ran-GDP to Ran-GTP dissociates Rev from KPNB1 and allows Rev's binding to the RRE in viral pre-mRNAs. Rev multimerization on the RRE via cooperative assembly exposes its nuclear export signal (NES) to the surface. Rev can then form a complex with XPO1/CRM1 and Ran-GTP, leading to nuclear export of the complex. Conversion from Ran-GTP to Ran-GDP mediates dissociation of the Rev/RRE/XPO1/RAN complex, so that Rev can return to the nucleus for a subsequent round of export. Beside KPNB1, also seems to interact with TNPO1/Transportin-1, RANBP5/IPO5 and IPO7/RANBP7 for nuclear import. The nucleoporin-like HRB/RIP is an essential cofactor that probably indirectly interacts with Rev to release HIV RNAs from the perinuclear region to the cytoplasm. This is Protein Rev from Human immunodeficiency virus type 1 group O (isolate MVP5180) (HIV-1).